We begin with the raw amino-acid sequence, 788 residues long: Leucine-rich repeat and fibronectin type-III domain-containing protein 2 (788 aa).

Residues 1-20 form the signal peptide; sequence METLLGGLLAFGMAFAVVDA. The region spanning 21–52 is the LRRNT domain; sequence CPKYCVCQNLSESLGTLCPSKGLLFVPPDIDR. Residues 21 to 534 are Extracellular-facing; the sequence is CPKYCVCQNL…MHSQILGGTM (514 aa). N-linked (GlcNAc...) asparagine glycans are attached at residues N29 and N74. LRR repeat units follow at residues 53–74, 77–98, 101–122, 125–146, 150–171, 174–195, and 198–219; these read RTVE…DFAN, GLVD…SFLD, SLRS…TLRG, NLQH…AFED, TLED…SVRR, NLHQ…TFAD, and KLAR…PIFA. The region spanning 242–288 is the LRRCT domain; it reads NPLHCNCELLWLRRLERDDDLKTCGSPGGLKGRYFWHIREEEFVCEP. In terms of domain architecture, Ig-like spans 289 to 375; it reads PLITQHTHKL…GEATATVEVS (87 aa). Cysteines 310 and 359 form a disulfide. N332, N341, N384, and N457 each carry an N-linked (GlcNAc...) asparagine glycan. Positions 383-423 are disordered; the sequence is SNSTSRMAPPKSRLSDITGSSKTSRGGGGSGAGEPPKSTPE. The 97-residue stretch at 422–518 folds into the Fibronectin type-III domain; that stretch reads PERAVLVSDV…GCAQFFTKAD (97 aa). A helical membrane pass occupies residues 535–555; that stretch reads ILVIGGIIVATLLVFIVILMV. Residues 556-788 are Cytoplasmic-facing; it reads RYKVCNHDAP…SSEWVMESTV (233 aa). Residues 620–641 are compositionally biased toward low complexity; it reads CDSSSSSSLGSGEAAGLSRGPW. Disordered regions lie at residues 620-655 and 668-707; these read CDSS…PSLD and SQRK…ATRA. A compositionally biased stretch (pro residues) spans 642-651; it reads RLPPPAPRPK. The PDZ-binding signature appears at 785–788; the sequence is ESTV.

Belongs to the LRFN family. In terms of assembly, forms heteromeric complexes with LRFN1, LRFN3 and LRFN4. Can form homomeric complexes, but not across cell junctions. Can form heteromeric complexes with LRFN5. Interacts with DLG1, DLG3 and DLG4; interaction with DLG4 is mediated by the PDZ-binding domain. Also interacts with DLG2. Interacts with 2 NMDA receptor subunits GRIN1 and GRIN2A.

Its subcellular location is the membrane. The protein resides in the synapse. It localises to the postsynaptic cell membrane. Promotes neurite outgrowth in hippocampal neurons. Enhances the cell surface expression of GRIN1 and GRIN2A NMDA receptor subunits. May play a role in redistributing DLG4 to the cell periphery. The sequence is that of Leucine-rich repeat and fibronectin type-III domain-containing protein 2 (Lrfn2) from Rattus norvegicus (Rat).